The chain runs to 122 residues: Photosystem II extrinsic protein U (122 aa).

A signal peptide spans 1 to 26; that stretch reads MKTIVRLFAILMVLISSVGFVGSAVA.

This sequence belongs to the PsbU family. In terms of assembly, PSII is composed of 1 copy each of membrane proteins PsbA, PsbB, PsbC, PsbD, PsbE, PsbF, PsbH, PsbI, PsbJ, PsbK, PsbL, PsbM, PsbT, PsbX, PsbY, PsbZ, Psb30/Ycf12, peripheral proteins PsbO, CyanoQ (PsbQ), PsbU, PsbV and a large number of cofactors. It forms dimeric complexes.

Its subcellular location is the cellular thylakoid membrane. One of the extrinsic, lumenal subunits of photosystem II (PSII). PSII is a light-driven water plastoquinone oxidoreductase, using light energy to abstract electrons from H(2)O, generating a proton gradient subsequently used for ATP formation. The extrinsic proteins stabilize the structure of photosystem II oxygen-evolving complex (OEC), the ion environment of oxygen evolution and protect the OEC against heat-induced inactivation. The protein is Photosystem II extrinsic protein U of Crocosphaera subtropica (strain ATCC 51142 / BH68) (Cyanothece sp. (strain ATCC 51142)).